Here is a 749-residue protein sequence, read N- to C-terminus: Subtilisin-like protease SBT4.14 (749 aa).

The N-terminal stretch at 1-28 is a signal peptide; sequence MIRSKCSCHHHLLVLVMVVLWISPRYAS. A propeptide spans 29–115 (activation peptide); the sequence is AEDEHAKDFY…VSRNQYRKLH (87 aa). In terms of domain architecture, Inhibitor I9 spans 38-115; it reads YIIYLGDRPD…VSRNQYRKLH (78 aa). A Peptidase S8 domain is found at 119 to 595; the sequence is SWDFVGLPLT…GGQINPRRAA (477 aa). D145 (charge relay system) is an active-site residue. Residue N176 is glycosylated (N-linked (GlcNAc...) asparagine). H210 acts as the Charge relay system in catalysis. N225, N233, N446, and N458 each carry an N-linked (GlcNAc...) asparagine glycan. S536 acts as the Charge relay system in catalysis. N618 carries an N-linked (GlcNAc...) asparagine glycan.

This sequence belongs to the peptidase S8 family. The C-terminal propeptide is autocleaved. In terms of tissue distribution, expressed only in roots, particularly in xylem.

This is Subtilisin-like protease SBT4.14 from Arabidopsis thaliana (Mouse-ear cress).